A 1648-amino-acid chain; its full sequence is Homeostatic regulator of DAG (1648 aa).

Residues 5–101 (IPPTLPLDLQ…YRVTTINSTS (97 aa)) enclose the DMAP1-binding domain. Asn-28, Asn-71, and Asn-98 each carry an N-linked (GlcNAc...) asparagine glycan. Disordered regions lie at residues 52–73 (PYTP…RNTS) and 96–130 (TINS…ENGS). Residues 60 to 71 (NSRKSKHLHRRN) are compositionally biased toward basic residues. Polar residues-rich tracts occupy residues 96–105 (TINSTSANNT) and 113–128 (YTAS…SDEN). Residue Ser-99 is modified to Phosphoserine. N-linked (GlcNAc...) asparagine glycans are attached at residues Asn-128, Asn-151, and Asn-209. The tract at residues 158 to 893 (AMTDSLPLIL…VEKKFLNNDL (736 aa)) is fatty acyl-AMP ligase-like domain 1. A helical transmembrane segment spans residues 228–248 (VIEFTIALLGCFISGMAAVPV). N-linked (GlcNAc...) asparagine glycans are attached at residues Asn-288, Asn-328, Asn-575, Asn-644, and Asn-730. Phosphoserine is present on Ser-751. N-linked (GlcNAc...) asparagine glycosylation is found at Asn-881, Asn-917, Asn-995, and Asn-1009. The interval 950 to 1648 (VKPKLALQCS…LLSDYEKDNI (699 aa)) is fatty acyl-AMP ligase-like domain 2. Residues 1061–1081 (YVAMIMACLYCNLLVIPLPSV) form a helical membrane-spanning segment. An N-linked (GlcNAc...) asparagine glycan is attached at Asn-1198. Residues 1224–1244 (GLGFMFSCLLGIYTGASTCLF) form a helical membrane-spanning segment. N-linked (GlcNAc...) asparagine glycosylation is found at Asn-1301, Asn-1302, Asn-1447, Asn-1472, Asn-1488, Asn-1565, Asn-1597, and Asn-1634.

It is found in the vacuole membrane. Its subcellular location is the mitochondrion membrane. Its function is as follows. Homeostatic regulator of a chemically distinct subset of diacylglycerols (DAGs) with C36 chain length that prevents the toxic accumulation of these specific DAGs in the logarithmic growth phase, which otherwise leads to endoplasmic reticulum stress. Maintains the basal level of DAG subspecies by directly facilitating DAG to triacylglycerol (TAG) conversion process, possibly via adenylation activity of its FLD domains. Does not affect the abundant DAG species (representing over 90% of total DAG pool), comprised of C32 and C34 chain lengths. Required for vacuole fusion-mediated osmoadaptation. The polypeptide is Homeostatic regulator of DAG (Saccharomyces cerevisiae (strain ATCC 204508 / S288c) (Baker's yeast)).